Consider the following 848-residue polypeptide: Paramyosin (848 aa).

The segment at 1–9 is nonhelical region; sequence AFGSMSVAD. Residues 10-833 adopt a coiled-coil conformation; it reads LGSLTRLEDK…HLIRAKHRSS (824 aa). A nonhelical region region spans residues 834-848; sequence VVTGKNASASKIYVL.

It belongs to the paramyosin family. As to quaternary structure, homodimer.

The protein localises to the cytoplasm. It is found in the myofibril. In terms of biological role, paramyosin is a major structural component of many thick filaments isolated from invertebrate muscles. The sequence is that of Paramyosin from Dirofilaria immitis (Canine heartworm).